We begin with the raw amino-acid sequence, 224 residues long: N6-methyladenosine RNA demethylase ALKBH (224 aa).

Residues 93–222 enclose the Fe2OG dioxygenase domain; the sequence is LAQAAIVNFY…RINLNVRQMR (130 aa). Fe cation is bound by residues His111, Asp113, and His178. Residue Arg213 participates in 2-oxoglutarate binding.

This sequence belongs to the alkB family. Fe(2+) serves as cofactor.

The catalysed reaction is an N(6)-methyladenosine in mRNA + 2-oxoglutarate + O2 = an adenosine in mRNA + formaldehyde + succinate + CO2. In terms of biological role, RNA demethylase that regulates the stability of mRNAs through an m(6)A-dependent manner. M6A is a modification present at internal sites of mRNAs and some non-coding RNAs and plays a role in mRNA stability and processing. Demethylate m6A at position A1935 within the 3'UTR of transcription factor ZAP1 and plays an important role in C.parasitica development and virulence. Target mRNAs are primarily associated with amino-acid biosynthesis, 2-oxocarboxylic acid metabolism, and ABC transporters, as well as alpha-amino acid metabolism, small-molecule biosynthesis, and the sulfite reductase complex (NADPH). The protein is N6-methyladenosine RNA demethylase ALKBH of Cryphonectria parasitica (strain ATCC 38755 / EP155).